The sequence spans 255 residues: 5'-nucleotidase SurE (255 aa).

The a divalent metal cation site is built by aspartate 8, aspartate 9, serine 40, and asparagine 92.

Belongs to the SurE nucleotidase family. It depends on a divalent metal cation as a cofactor.

Its subcellular location is the cytoplasm. The catalysed reaction is a ribonucleoside 5'-phosphate + H2O = a ribonucleoside + phosphate. Its function is as follows. Nucleotidase that shows phosphatase activity on nucleoside 5'-monophosphates. This Brucella canis (strain ATCC 23365 / NCTC 10854 / RM-666) protein is 5'-nucleotidase SurE.